The sequence spans 191 residues: Large ribosomal subunit protein bL9 (191 aa).

Positions 171-191 are disordered; that stretch reads EDALKPEDFFNPEAELESEEE.

The protein belongs to the bacterial ribosomal protein bL9 family.

In terms of biological role, binds to the 23S rRNA. In Rhizobium meliloti (strain 1021) (Ensifer meliloti), this protein is Large ribosomal subunit protein bL9.